We begin with the raw amino-acid sequence, 274 residues long: Penicillin-insensitive murein endopeptidase (274 aa).

An N-terminal signal peptide occupies residues Met1–Ala19. Cystine bridges form between Cys44/Cys265, Cys187/Cys235, and Cys216/Cys223. Residues His110, His113, Asp120, Asp147, His150, and His211 each coordinate Zn(2+). A disordered region spans residues Glu224–Pro263. A compositionally biased stretch (pro residues) spans Pro245 to Pro263.

This sequence belongs to the peptidase M74 family. In terms of assembly, dimer. It depends on Zn(2+) as a cofactor.

The protein resides in the periplasm. In terms of biological role, murein endopeptidase that cleaves the D-alanyl-meso-2,6-diamino-pimelyl amide bond that connects peptidoglycan strands. Likely plays a role in the removal of murein from the sacculus. In Klebsiella pneumoniae subsp. pneumoniae (strain ATCC 700721 / MGH 78578), this protein is Penicillin-insensitive murein endopeptidase.